Reading from the N-terminus, the 88-residue chain is Cell division topological specificity factor (88 aa).

Belongs to the MinE family.

Its function is as follows. Prevents the cell division inhibition by proteins MinC and MinD at internal division sites while permitting inhibition at polar sites. This ensures cell division at the proper site by restricting the formation of a division septum at the midpoint of the long axis of the cell. In Psychromonas ingrahamii (strain DSM 17664 / CCUG 51855 / 37), this protein is Cell division topological specificity factor.